Here is a 314-residue protein sequence, read N- to C-terminus: D-alanine--D-alanine ligase (314 aa).

Residues 114–309 form the ATP-grasp domain; the sequence is KQLWRAHGLP…FDALVLRILD (196 aa). 140 to 195 is an ATP binding site; sequence IEALGLPLIVKPVHEGSTIGISIVETRDALIAAHAEASRFDSAIMAERFVQGEEYT. Mg(2+) is bound by residues aspartate 263, glutamate 276, and asparagine 278.

Belongs to the D-alanine--D-alanine ligase family. The cofactor is Mg(2+). It depends on Mn(2+) as a cofactor.

The protein localises to the cytoplasm. The catalysed reaction is 2 D-alanine + ATP = D-alanyl-D-alanine + ADP + phosphate + H(+). The protein operates within cell wall biogenesis; peptidoglycan biosynthesis. Its function is as follows. Cell wall formation. This is D-alanine--D-alanine ligase from Chromohalobacter salexigens (strain ATCC BAA-138 / DSM 3043 / CIP 106854 / NCIMB 13768 / 1H11).